We begin with the raw amino-acid sequence, 197 residues long: Cytochrome c-L (197 aa).

An N-terminal signal peptide occupies residues 1 to 25 (MMNRVKIGTALLGLTLAGIALPALA). Heme c-binding residues include Cys-90, Cys-93, and His-94.

Post-translationally, binds 1 heme c group covalently per subunit.

It localises to the periplasm. Functionally, electron acceptor for MDH. Acts in methanol oxidation. The chain is Cytochrome c-L (moxG) from Methylorubrum extorquens (strain ATCC 14718 / DSM 1338 / JCM 2805 / NCIMB 9133 / AM1) (Methylobacterium extorquens).